The sequence spans 465 residues: Cysteine--tRNA ligase (465 aa).

Cysteine 27 contributes to the Zn(2+) binding site. The short motif at 29–39 is the 'HIGH' region element; it reads PTVYDEVHIGH. Residues cysteine 204, histidine 229, and glutamate 233 each contribute to the Zn(2+) site. Residues 261-265 carry the 'KMSKS' region motif; it reads KMSKS. Lysine 264 serves as a coordination point for ATP.

The protein belongs to the class-I aminoacyl-tRNA synthetase family. Zn(2+) is required as a cofactor.

The protein resides in the cytoplasm. It carries out the reaction tRNA(Cys) + L-cysteine + ATP = L-cysteinyl-tRNA(Cys) + AMP + diphosphate. The sequence is that of Cysteine--tRNA ligase from Metallosphaera sedula (strain ATCC 51363 / DSM 5348 / JCM 9185 / NBRC 15509 / TH2).